Here is an 85-residue protein sequence, read N- to C-terminus: UPF0434 protein HNE_3545 (85 aa).

The protein belongs to the UPF0434 family.

This Hyphomonas neptunium (strain ATCC 15444) protein is UPF0434 protein HNE_3545.